The primary structure comprises 80 residues: UPF0154 protein SZO_03240 (80 aa).

Residues 4–24 (AIWILLIIVALTAGLFGGIFI) form a helical membrane-spanning segment.

Belongs to the UPF0154 family.

Its subcellular location is the cell membrane. This Streptococcus equi subsp. zooepidemicus (strain H70) protein is UPF0154 protein SZO_03240.